The following is a 652-amino-acid chain: Vitrin (652 aa).

The first 26 residues, 1 to 26 (MGIVVLTMKASVIEMFLVLLVTGIQS), serve as a signal peptide directing secretion. An LCCL domain is found at 40-133 (TVPQISCDVR…LSLPRWRESF (94 aa)). 2 disulfide bridges follow: Cys46–Cys62 and Cys66–Cys86. 2 disordered regions span residues 137–181 (EGKP…AAQP) and 196–231 (THTT…EPAL). Over residues 145 to 158 (TYPSSLTYSSSKSP) the composition is skewed to low complexity. Positions 196 to 212 (THTTLPKPSPSAGSTAS) are enriched in polar residues. 2 VWFA domains span residues 267–452 (DLSF…VKRV) and 469–638 (DIGF…VPKV). The N-linked (GlcNAc...) asparagine glycan is linked to Asn494.

In terms of assembly, binds dermatan sulfate and chondroitin sulfate.

It is found in the secreted. Its subcellular location is the extracellular space. It localises to the extracellular matrix. Its function is as follows. Promotes matrix assembly and cell adhesiveness. Plays a role in spinal cord formation by regulating the proliferation and differentiation of neural stem cells. This chain is Vitrin (VIT), found in Bos taurus (Bovine).